A 572-amino-acid chain; its full sequence is MARTTFLVSVSLFVSAVLARTVEYNLKISNGKIAPDGVERDATLVNGGYPGPLIFANKGDTLKVKVQNKLTNPDMYRTTSIHWHGLLQHRNADDDGPAFVTQCPIVPQASYTYTMPLGDQTGTYWYHSHLSSQYVDGLRGPLVIYDPKDPHRRLYDIDDEKTVLIIGDWYHTSSKAILATGNITLQQPDSATINGKGRFDPDNTPANPNTLYTLKVKRGKRYRLRVINSSAIASFRMSIQGHKMTVIAADGVSTKPYQVDSFDILAGQRIDAVVEANQEPDTYWINAPLTNVANKTAQALLIYEDDRRPYHPPKGPYRKWSVSEAIIKYWKHKHGRGLLSGHGGLKARMMEGSLHLHGRRDIVKRQNETTTVVMDETKLVPLEHPGAACGSKPADLVIDLTFGVNFTTGHWMINGIPHKSPDMPTLLKILTDTDGVTESDFTQPEHTIILPKNKCVEFNIKGNSGLGIVHPIHLHGHTFDVVQFGNNPPNYVNPPRRDVVGATDEGVRFQFKTDNPGPWFLHCHIDWHLEEGFAMVFAEAPEAIKGGPKSVPVDRQWKDLCRKYGSLPAGFL.

Residues 1–18 form the signal peptide; the sequence is MARTTFLVSVSLFVSAVL. Plastocyanin-like domains are found at residues 21 to 145 and 157 to 304; these read TVEY…LVIY and IDDE…LIYE. 4 residues coordinate Cu cation: histidine 82, histidine 84, histidine 127, and histidine 129. A disulfide bridge links cysteine 103 with cysteine 561. N-linked (GlcNAc...) asparagine glycosylation is found at asparagine 182, asparagine 228, asparagine 294, asparagine 367, and asparagine 405. Positions 422-540 constitute a Plastocyanin-like 3 domain; it reads DMPTLLKILT…EGFAMVFAEA (119 aa). Residues histidine 470, histidine 473, histidine 475, histidine 522, cysteine 523, histidine 524, and histidine 528 each coordinate Cu cation.

This sequence belongs to the multicopper oxidase family. Homodimer. Cu cation serves as cofactor. In mycelia, at a lower level than LCC4.

The protein localises to the secreted. It catalyses the reaction 4 hydroquinone + O2 = 4 benzosemiquinone + 2 H2O. Functionally, lignin degradation and detoxification of lignin-derived products. The polypeptide is Laccase-3 (LCC3) (Thanatephorus cucumeris (Black scurf of potato)).